We begin with the raw amino-acid sequence, 230 residues long: Acyl-protein thioesterase 1 (230 aa).

Active-site charge relay system residues include Ser119, Asp174, and His208. Position 224 is an N6-acetyllysine (Lys224).

The protein belongs to the AB hydrolase superfamily. AB hydrolase 2 family. Homodimer. In terms of tissue distribution, ubiquitous. Detected at low levels in all tissues tested.

The protein resides in the cytoplasm. It localises to the cell membrane. The protein localises to the nucleus membrane. Its subcellular location is the endoplasmic reticulum. It catalyses the reaction S-hexadecanoyl-L-cysteinyl-[protein] + H2O = L-cysteinyl-[protein] + hexadecanoate + H(+). The enzyme catalyses 1-hexadecanoyl-sn-glycero-3-phosphocholine + H2O = sn-glycerol 3-phosphocholine + hexadecanoate + H(+). The catalysed reaction is a 1-(9Z-octadecenoyl)-2-acyl-sn-glycero-3-phosphocholine + H2O = a 2-acyl-sn-glycero-3-phosphocholine + (9Z)-octadecenoate + H(+). Functionally, acts as an acyl-protein thioesterase. Hydrolyzes fatty acids from S-acylated cysteine residues in proteins such as trimeric G alpha proteins or HRAS. Acts as a palmitoyl thioesterase that catalyzes depalmitoylation of proteins, such as ADRB2, KCNMA1 and SQSTM1. Acts as a negative regulator of autophagy by mediating palmitoylation of SQSTM1, decreasing affinity between SQSTM1 and ATG8 proteins and recruitment of ubiquitinated cargo proteins to autophagosomes. Acts as a lysophospholipase and hydrolyzes lysophosphatidylcholine (lyso-PC). Also hydrolyzes lysophosphatidylethanolamine (lyso-PE), lysophosphatidylinositol (lyso-PI) and lysophosphatidylserine (lyso-PS). Has much higher thioesterase activity than lysophospholipase activity. Contributes to the production of lysophosphatidic acid (LPA) during blood coagulation by recognizing and cleaving plasma phospholipids to generate lysophospholipids which in turn act as substrates for ENPP2 to produce LPA. The sequence is that of Acyl-protein thioesterase 1 (Lypla1) from Rattus norvegicus (Rat).